The chain runs to 383 residues: Succinyl-diaminopimelate desuccinylase (383 aa).

Histidine 73 is a Zn(2+) binding site. Residue aspartate 75 is part of the active site. A Zn(2+)-binding site is contributed by aspartate 107. Glutamate 141 functions as the Proton acceptor in the catalytic mechanism. The Zn(2+) site is built by glutamate 142, glutamate 170, and histidine 356.

The protein belongs to the peptidase M20A family. DapE subfamily. In terms of assembly, homodimer. Zn(2+) is required as a cofactor. Co(2+) serves as cofactor.

The catalysed reaction is N-succinyl-(2S,6S)-2,6-diaminopimelate + H2O = (2S,6S)-2,6-diaminopimelate + succinate. The protein operates within amino-acid biosynthesis; L-lysine biosynthesis via DAP pathway; LL-2,6-diaminopimelate from (S)-tetrahydrodipicolinate (succinylase route): step 3/3. Its function is as follows. Catalyzes the hydrolysis of N-succinyl-L,L-diaminopimelic acid (SDAP), forming succinate and LL-2,6-diaminopimelate (DAP), an intermediate involved in the bacterial biosynthesis of lysine and meso-diaminopimelic acid, an essential component of bacterial cell walls. The polypeptide is Succinyl-diaminopimelate desuccinylase (Pseudomonas aeruginosa (strain ATCC 15692 / DSM 22644 / CIP 104116 / JCM 14847 / LMG 12228 / 1C / PRS 101 / PAO1)).